The primary structure comprises 500 residues: Cytochrome P450 71B35 (500 aa).

The helical transmembrane segment at 1 to 21 (MAHIWLLPLIFLVCILLAVFN) threads the bilayer. C439 serves as a coordination point for heme.

Belongs to the cytochrome P450 family. Heme serves as cofactor.

The protein localises to the membrane. The polypeptide is Cytochrome P450 71B35 (CYP71B35) (Arabidopsis thaliana (Mouse-ear cress)).